A 617-amino-acid polypeptide reads, in one-letter code: Putative metal ion transporter C17A12.14 (617 aa).

The tract at residues 1–141 is disordered; that stretch reads MPSNTSRSVP…GKNTRDQPSP (141 aa). S105 is modified (phosphoserine). Over residues 117–136 the composition is skewed to basic and acidic residues; it reads SHPEDIQRKEFETENGKNTR. S152, S162, S226, and S241 each carry phosphoserine. 2 helical membrane passes run 560-580 and 590-610; these read TILG…GMNV and LGWF…SFIL.

The protein belongs to the CorA metal ion transporter (MIT) (TC 1.A.35) family. Interacts with sad1.

Its subcellular location is the membrane. This is Putative metal ion transporter C17A12.14 from Schizosaccharomyces pombe (strain 972 / ATCC 24843) (Fission yeast).